The chain runs to 507 residues: ATP synthase subunit alpha, chloroplastic (507 aa).

170 to 177 lines the ATP pocket; that stretch reads GDRQTGKT.

Belongs to the ATPase alpha/beta chains family. F-type ATPases have 2 components, CF(1) - the catalytic core - and CF(0) - the membrane proton channel. CF(1) has five subunits: alpha(3), beta(3), gamma(1), delta(1), epsilon(1). CF(0) has four main subunits: a, b, b' and c.

Its subcellular location is the plastid. It is found in the chloroplast thylakoid membrane. The catalysed reaction is ATP + H2O + 4 H(+)(in) = ADP + phosphate + 5 H(+)(out). Its function is as follows. Produces ATP from ADP in the presence of a proton gradient across the membrane. The alpha chain is a regulatory subunit. The chain is ATP synthase subunit alpha, chloroplastic from Chloranthus spicatus (Chulantree).